The following is a 179-amino-acid chain: Large ribosomal subunit protein uL5c (179 aa).

Belongs to the universal ribosomal protein uL5 family. As to quaternary structure, part of the 50S ribosomal subunit; contacts the 5S rRNA.

The protein localises to the plastid. Its function is as follows. Binds 5S rRNA, forms part of the central protuberance of the 50S subunit. The chain is Large ribosomal subunit protein uL5c (rpl5) from Euglena longa (Euglenophycean alga).